We begin with the raw amino-acid sequence, 63 residues long: Alpha-toxin CsE5 (63 aa).

An LCN-type CS-alpha/beta domain is found at 2–61 (KDGYPVDSGNCKYECLKDDYCNDLCLERKADKGYCYWGKVSCYCYGLPDNSPTKTSGKCN). Disulfide bonds link Cys-12–Cys-60, Cys-16–Cys-36, Cys-22–Cys-43, and Cys-26–Cys-45.

This sequence belongs to the long (4 C-C) scorpion toxin superfamily. Sodium channel inhibitor family. Alpha subfamily. As to expression, expressed by the venom gland.

The protein localises to the secreted. Functionally, alpha toxins bind voltage-independently at site-3 of sodium channels (Nav) and inhibit the inactivation of the activated channels, thereby blocking neuronal transmission. The protein is Alpha-toxin CsE5 of Centruroides sculpturatus (Arizona bark scorpion).